Here is a 436-residue protein sequence, read N- to C-terminus: GTPase Obg (436 aa).

The region spanning 2 to 160 is the Obg domain; it reads SMFLDTAKIK…RELQLELKIL (159 aa). One can recognise an OBG-type G domain in the interval 161–338; it reads ADVGLVGFPS…LLDATAELLD (178 aa). GTP is bound by residues 167-174, 192-196, 214-217, 284-287, and 319-321; these read GFPSVGKS, FTTIV, DLPG, NKMD, and SGL. S174 and T194 together coordinate Mg(2+). Residues 358 to 436 form the OCT domain; the sequence is GFDEEEKAFE…IGKFEFEFVD (79 aa).

The protein belongs to the TRAFAC class OBG-HflX-like GTPase superfamily. OBG GTPase family. As to quaternary structure, monomer. Mg(2+) serves as cofactor.

Its subcellular location is the cytoplasm. In terms of biological role, an essential GTPase which binds GTP, GDP and possibly (p)ppGpp with moderate affinity, with high nucleotide exchange rates and a fairly low GTP hydrolysis rate. Plays a role in control of the cell cycle, stress response, ribosome biogenesis and in those bacteria that undergo differentiation, in morphogenesis control. The protein is GTPase Obg of Streptococcus pneumoniae (strain CGSP14).